A 433-amino-acid chain; its full sequence is Bifunctional protein GlmU (433 aa).

The tract at residues 1 to 226 (MLSVIILAAG…EECFLGVNSQ (226 aa)) is pyrophosphorylase. Residues 7-10 (LAAG), Lys-21, and 80-81 (GT) contribute to the UDP-N-acetyl-alpha-D-glucosamine site. Residue Asp-106 coordinates Mg(2+). Residues Gly-138, Glu-152, Asn-167, and Asn-224 each contribute to the UDP-N-acetyl-alpha-D-glucosamine site. Residue Asn-224 coordinates Mg(2+). A linker region spans residues 227 to 247 (TERAKAEEIMLERLRKNAMDL). Residues 248–433 (GVVMQLPNSI…NGYFKFFKKP (186 aa)) form an N-acetyltransferase region. Residues Arg-311 and Lys-328 each coordinate UDP-N-acetyl-alpha-D-glucosamine. The Proton acceptor role is filled by His-339. Residues Tyr-342 and Asn-353 each contribute to the UDP-N-acetyl-alpha-D-glucosamine site. Residues Ala-356, 362–363 (NY), Ser-381, Ser-399, and Arg-416 each bind acetyl-CoA.

It in the N-terminal section; belongs to the N-acetylglucosamine-1-phosphate uridyltransferase family. In the C-terminal section; belongs to the transferase hexapeptide repeat family. In terms of assembly, homotrimer. Requires Mg(2+) as cofactor.

It is found in the cytoplasm. It catalyses the reaction alpha-D-glucosamine 1-phosphate + acetyl-CoA = N-acetyl-alpha-D-glucosamine 1-phosphate + CoA + H(+). The catalysed reaction is N-acetyl-alpha-D-glucosamine 1-phosphate + UTP + H(+) = UDP-N-acetyl-alpha-D-glucosamine + diphosphate. It functions in the pathway nucleotide-sugar biosynthesis; UDP-N-acetyl-alpha-D-glucosamine biosynthesis; N-acetyl-alpha-D-glucosamine 1-phosphate from alpha-D-glucosamine 6-phosphate (route II): step 2/2. It participates in nucleotide-sugar biosynthesis; UDP-N-acetyl-alpha-D-glucosamine biosynthesis; UDP-N-acetyl-alpha-D-glucosamine from N-acetyl-alpha-D-glucosamine 1-phosphate: step 1/1. The protein operates within bacterial outer membrane biogenesis; LPS lipid A biosynthesis. Functionally, catalyzes the last two sequential reactions in the de novo biosynthetic pathway for UDP-N-acetylglucosamine (UDP-GlcNAc). The C-terminal domain catalyzes the transfer of acetyl group from acetyl coenzyme A to glucosamine-1-phosphate (GlcN-1-P) to produce N-acetylglucosamine-1-phosphate (GlcNAc-1-P), which is converted into UDP-GlcNAc by the transfer of uridine 5-monophosphate (from uridine 5-triphosphate), a reaction catalyzed by the N-terminal domain. This Helicobacter pylori (strain ATCC 700392 / 26695) (Campylobacter pylori) protein is Bifunctional protein GlmU.